Consider the following 430-residue polypeptide: von Willebrand factor (430 aa).

N-linked (GlcNAc...) asparagine glycosylation occurs at N6. A disulfide bond links C9 and C12. O-linked (GalNAc...) threonine glycosylation is found at T23, T30, and T31. C47 and C233 are oxidised to a cystine. The 177-residue stretch at 52–228 (DLVFLLDGSY…DELEQRRDEI (177 aa)) folds into the VWFA 1; binding site for platelet glycoprotein Ib domain. The O-linked (GalNAc...) threonine glycan is linked to T252. O-linked (GalNAc...) serine glycosylation is present at S261. Residues 273–430 (DVVFVLEASD…ITPIFIQDFE (158 aa)) enclose the VWFA 2 domain. Residues N290 and N349 are each glycosylated (N-linked (GlcNAc...) asparagine).

In terms of assembly, multimeric. Interacts with F8. In terms of processing, N- and O-glycosylated. Plasma.

The protein localises to the secreted. It localises to the extracellular space. The protein resides in the extracellular matrix. Important in the maintenance of hemostasis, it promotes adhesion of platelets to the sites of vascular injury by forming a molecular bridge between sub-endothelial collagen matrix and platelet-surface receptor complex GPIb-IX-V. Also acts as a chaperone for coagulation factor VIII, delivering it to the site of injury, stabilizing its heterodimeric structure and protecting it from premature clearance from plasma. This is von Willebrand factor from Rattus norvegicus (Rat).